The sequence spans 287 residues: Protein HEXIM2 (287 aa).

Disordered regions lie at residues 1 to 212 (MKDW…RSKE) and 266 to 287 (RLRQ…QPGS). S31 carries the phosphoserine modification. T34 and T48 each carry phosphothreonine. Phosphoserine is present on residues S53, S55, S73, S78, and S83. Positions 89 to 105 (ARKKHRRRPSKRKRHWR) are enriched in basic residues. The span at 115 to 134 (KQQRDERQSQRASRVREEMF) shows a compositional bias: basic and acidic residues. The interaction with P-TEFb stretch occupies residues 142-145 (PYNT). Basic and acidic residues-rich tracts occupy residues 181–212 (GQGR…RSKE) and 266–280 (RLRQ…EGGR). Positions 208 to 278 (GRSKEELVRD…QENEMWNREG (71 aa)) form a coiled coil. Residues 227–287 (QAEEEMRRLR…GGRRGGQPGS (61 aa)) are interaction with CCNT1, HEXIM1 and HEXIM2.

It belongs to the HEXIM family. In terms of assembly, homooligomer and heterooligomer with HEXIM1; probably dimeric. Core component of the 7SK RNP complex, at least composed of 7SK RNA, LARP7, MEPCE, HEXIM1 (or HEXIM2) and P-TEFb (composed of CDK9 and CCNT1/cyclin-T1). Interacts with CCNT2.

It is found in the nucleus. In terms of biological role, transcriptional regulator which functions as a general RNA polymerase II transcription inhibitor. Core component of the 7SK RNP complex: in cooperation with 7SK snRNA sequesters P-TEFb in a large inactive 7SK snRNP complex preventing RNA polymerase II phosphorylation and subsequent transcriptional elongation. This chain is Protein HEXIM2 (HEXIM2), found in Bos taurus (Bovine).